The chain runs to 871 residues: Protein translocase subunit SecA (871 aa).

ATP contacts are provided by residues glutamine 80, 98 to 102 (GEGKT), and aspartate 537.

Belongs to the SecA family. Monomer and homodimer. Part of the essential Sec protein translocation apparatus which comprises SecA, SecYEG and auxiliary proteins SecDF. Other proteins may also be involved. A single SecA monomer interacts with SecY in the channel.

It is found in the cell inner membrane. Its subcellular location is the cytoplasm. It carries out the reaction ATP + H2O + cellular proteinSide 1 = ADP + phosphate + cellular proteinSide 2.. Part of the Sec protein translocase complex. Interacts with the SecYEG preprotein conducting channel. Has a central role in coupling the hydrolysis of ATP to the transfer of proteins into and across the cell membrane, serving as an ATP-driven molecular motor driving the stepwise translocation of polypeptide chains across the membrane. The protein is Protein translocase subunit SecA of Thermotoga maritima (strain ATCC 43589 / DSM 3109 / JCM 10099 / NBRC 100826 / MSB8).